Reading from the N-terminus, the 317-residue chain is Probable cell division protein WhiA (317 aa).

The segment at residues 281 to 314 is a DNA-binding region (H-T-H motif); sequence TLKELGEMINPPIGKSGVNHRLRKLDQIADRERG.

Belongs to the WhiA family.

Its function is as follows. Involved in cell division and chromosome segregation. This is Probable cell division protein WhiA from Alkaliphilus metalliredigens (strain QYMF).